Consider the following 355-residue polypeptide: MIPEERLQSVIARFEAVQSEMNSDVPRDRFVALSKEFSELEPVAAAIGHLLARRREYADAEQLLRVRDMAEMAKEEIARLNEELPRLEHEVQLMLLPKDAADDRNVILEVRAGTGGDEAALFAGDLFRMYERYASNQGWKVELIAASEGEMGGYKEIIAGISGPGVYAKLKFESGVHRVQRVPVTEGGGRIHTSAATVAVLPEAEEVDVEIEDKDLRIDVYRASGAGGQHVNKTESAVRITHLPTGIVVAQQDEKSQHKNKARAMQILRARIFDAERERLDRERSAARKGQVGSGDRSERIRTYNFPQSRVTDHRINLTLHKLDQVLEGEALGELIDALIAEDQAARLAAMGDEA.

Glutamine 229 is subject to N5-methylglutamine. Residues 280–299 (LDRERSAARKGQVGSGDRSE) are disordered.

It belongs to the prokaryotic/mitochondrial release factor family. Post-translationally, methylated by PrmC. Methylation increases the termination efficiency of RF1.

It localises to the cytoplasm. In terms of biological role, peptide chain release factor 1 directs the termination of translation in response to the peptide chain termination codons UAG and UAA. In Parvibaculum lavamentivorans (strain DS-1 / DSM 13023 / NCIMB 13966), this protein is Peptide chain release factor 1.